The primary structure comprises 506 residues: Glycerol kinase (506 aa).

Thr-12 is a binding site for ADP. Residues Thr-12, Thr-13, and Ser-14 each coordinate ATP. Thr-12 is a sn-glycerol 3-phosphate binding site. Arg-16 serves as a coordination point for ADP. Sn-glycerol 3-phosphate-binding residues include Arg-82, Glu-83, Tyr-134, and Asp-246. Glycerol is bound by residues Arg-82, Glu-83, Tyr-134, Asp-246, and Gln-247. Residues Thr-268 and Gly-312 each coordinate ADP. Positions 268, 312, 316, and 413 each coordinate ATP. The ADP site is built by Gly-413 and Asn-417.

It belongs to the FGGY kinase family.

It catalyses the reaction glycerol + ATP = sn-glycerol 3-phosphate + ADP + H(+). It participates in polyol metabolism; glycerol degradation via glycerol kinase pathway; sn-glycerol 3-phosphate from glycerol: step 1/1. Its activity is regulated as follows. Inhibited by fructose 1,6-bisphosphate (FBP). Its function is as follows. Key enzyme in the regulation of glycerol uptake and metabolism. Catalyzes the phosphorylation of glycerol to yield sn-glycerol 3-phosphate. The polypeptide is Glycerol kinase (Leifsonia xyli subsp. xyli (strain CTCB07)).